The sequence spans 373 residues: GTP cyclohydrolase 1 type 2 homolog (373 aa).

His-68, His-69, Asp-107, His-333, and Glu-336 together coordinate a divalent metal cation.

It belongs to the GTP cyclohydrolase I type 2/NIF3 family. As to quaternary structure, homohexamer.

This is GTP cyclohydrolase 1 type 2 homolog (yqfO) from Bacillus subtilis (strain 168).